The following is a 189-amino-acid chain: MKVSTIESGEISKGASSPRKGMKRGLSIMDFILRIFAAMSTLGSALSMGTAKQTMPFATRFVRFKVSFHDLPTFLFFVTANSIVCGYLALSLVLSFFHIVRTISVKSRILLVFLDTVMFGLLTSGASAAAAIVYVAHYGNPSANWFPFCQQYNSFCGRISGSLVGSFIAVVIFMILILMSGISISKSKH.

A disordered region spans residues 1-21; the sequence is MKVSTIESGEISKGASSPRKG. Residues 1-25 are Cytoplasmic-facing; it reads MKVSTIESGEISKGASSPRKGMKRG. Residues 26 to 46 form a helical membrane-spanning segment; it reads LSIMDFILRIFAAMSTLGSAL. Topologically, residues 47-73 are extracellular; the sequence is SMGTAKQTMPFATRFVRFKVSFHDLPT. Residues 74 to 94 form a helical membrane-spanning segment; sequence FLFFVTANSIVCGYLALSLVL. Over 95 to 108 the chain is Cytoplasmic; that stretch reads SFFHIVRTISVKSR. A helical membrane pass occupies residues 109–129; that stretch reads ILLVFLDTVMFGLLTSGASAA. Over 130-163 the chain is Extracellular; it reads AAIVYVAHYGNPSANWFPFCQQYNSFCGRISGSL. Residues 164 to 184 traverse the membrane as a helical segment; it reads VGSFIAVVIFMILILMSGISI. Topologically, residues 185–189 are cytoplasmic; that stretch reads SKSKH.

The protein belongs to the Casparian strip membrane proteins (CASP) family. Homodimer and heterodimers.

The protein resides in the cell membrane. Functionally, regulates membrane-cell wall junctions and localized cell wall deposition. Required for establishment of the Casparian strip membrane domain (CSD) and the subsequent formation of Casparian strips, a cell wall modification of the root endodermis that determines an apoplastic barrier between the intraorganismal apoplasm and the extraorganismal apoplasm and prevents lateral diffusion. The sequence is that of Casparian strip membrane protein 2 from Medicago truncatula (Barrel medic).